We begin with the raw amino-acid sequence, 313 residues long: tRNA uridine(34) hydroxylase (313 aa).

The 95-residue stretch at 124–218 (SDPEVLLIDT…YLEEVPQQES (95 aa)) folds into the Rhodanese domain. The Cysteine persulfide intermediate role is filled by cysteine 178.

Belongs to the TrhO family.

It carries out the reaction uridine(34) in tRNA + AH2 + O2 = 5-hydroxyuridine(34) in tRNA + A + H2O. Its function is as follows. Catalyzes oxygen-dependent 5-hydroxyuridine (ho5U) modification at position 34 in tRNAs. In Pseudomonas fluorescens (strain ATCC BAA-477 / NRRL B-23932 / Pf-5), this protein is tRNA uridine(34) hydroxylase.